The following is a 351-amino-acid chain: MNVAIVGATGYGGIQSVNLLKDNKNYKISYLGGYKTSGTKWSDNFPFIKLDSNNLIEKISIDRIADKADVALLCLPNGISSTLTRGLLEKGVKVIDLSADYRYKSLEQWKRIYSNEAAKYKRDDDDLCKEAVYGLPEINNKDISKARLIACPGCYPTSALIPLIPFLSQGIIDNEGIIIDSKSGTSGGGRESSQKLLFSECGDGLSAYGLINHRHTSEIEQIASFISGNDIELLFTPHLLPMIRGMHSTIYGRLRDPGLTSSDCRIILENFYRNYSNIRVLPVDIYPSTKWVKNTNEIHLSVKVDNRNGRIILLSVIDNLLKGQTGQAIQNLNLISGLPLNNGLEMINHYP.

Residue Cys154 is part of the active site.

It belongs to the NAGSA dehydrogenase family. Type 1 subfamily.

Its subcellular location is the cytoplasm. It carries out the reaction N-acetyl-L-glutamate 5-semialdehyde + phosphate + NADP(+) = N-acetyl-L-glutamyl 5-phosphate + NADPH + H(+). Its pathway is amino-acid biosynthesis; L-arginine biosynthesis; N(2)-acetyl-L-ornithine from L-glutamate: step 3/4. Its function is as follows. Catalyzes the NADPH-dependent reduction of N-acetyl-5-glutamyl phosphate to yield N-acetyl-L-glutamate 5-semialdehyde. The protein is N-acetyl-gamma-glutamyl-phosphate reductase of Prochlorococcus marinus (strain MIT 9515).